The chain runs to 199 residues: Holliday junction branch migration complex subunit RuvA (199 aa).

Residues 1–64 (MIALLTGKLA…EDAINLYGFR (64 aa)) are domain I. Residues 65–143 (TQQEKELFQL…KLGLAQPQAG (79 aa)) are domain II. The tract at residues 144 to 148 (GTTAP) is flexible linker. The domain III stretch occupies residues 149-199 (AKQEIRDDVLSALINLGYKEAVVQKALAELKVTEDATVELVLKQALKILMK).

The protein belongs to the RuvA family. As to quaternary structure, homotetramer. Forms an RuvA(8)-RuvB(12)-Holliday junction (HJ) complex. HJ DNA is sandwiched between 2 RuvA tetramers; dsDNA enters through RuvA and exits via RuvB. An RuvB hexamer assembles on each DNA strand where it exits the tetramer. Each RuvB hexamer is contacted by two RuvA subunits (via domain III) on 2 adjacent RuvB subunits; this complex drives branch migration. In the full resolvosome a probable DNA-RuvA(4)-RuvB(12)-RuvC(2) complex forms which resolves the HJ.

It localises to the cytoplasm. The RuvA-RuvB-RuvC complex processes Holliday junction (HJ) DNA during genetic recombination and DNA repair, while the RuvA-RuvB complex plays an important role in the rescue of blocked DNA replication forks via replication fork reversal (RFR). RuvA specifically binds to HJ cruciform DNA, conferring on it an open structure. The RuvB hexamer acts as an ATP-dependent pump, pulling dsDNA into and through the RuvAB complex. HJ branch migration allows RuvC to scan DNA until it finds its consensus sequence, where it cleaves and resolves the cruciform DNA. The sequence is that of Holliday junction branch migration complex subunit RuvA from Citrifermentans bemidjiense (strain ATCC BAA-1014 / DSM 16622 / JCM 12645 / Bem) (Geobacter bemidjiensis).